Consider the following 374-residue polypeptide: Ribosomal RNA large subunit methyltransferase G (374 aa).

This sequence belongs to the methyltransferase superfamily. RlmG family.

The protein localises to the cytoplasm. It carries out the reaction guanosine(1835) in 23S rRNA + S-adenosyl-L-methionine = N(2)-methylguanosine(1835) in 23S rRNA + S-adenosyl-L-homocysteine + H(+). Its function is as follows. Specifically methylates the guanine in position 1835 (m2G1835) of 23S rRNA. The chain is Ribosomal RNA large subunit methyltransferase G from Pseudomonas putida (strain W619).